The primary structure comprises 255 residues: MSFKRPCPLARYNRTSYFYPTTFSESSEHSHLLVSPVLVASAVIGVVITLSCITIIVGSIRRDRQARIQRHHHRHRRHHHHHRHRRRRHREYASGGHTHSRSSPRMPYACSPAEDWPPPLDVSSEGDVDVTVLWELYPDSPPGYEECMGPGATQLYVPTDAPPPYSMTDSCPRLNGALDSDSGQSRSHRQQEQRTQGQSRLHTVSMDTLPPYEAVCGTGSPSDLLPLPGPEPWPSNSQGSPIPTQAPMPSPERIV.

A helical membrane pass occupies residues 37–57; that stretch reads VLVASAVIGVVITLSCITIIV. Positions 69–90 are enriched in basic residues; that stretch reads QRHHHRHRRHHHHHRHRRRRHR. Disordered regions lie at residues 69-109 and 160-255; these read QRHH…MPYA and DAPP…ERIV. Positions 193 to 206 are enriched in polar residues; the sequence is QRTQGQSRLHTVSM. The segment covering 217–226 has biased composition (low complexity); the sequence is GTGSPSDLLP. Residues 234–243 are compositionally biased toward polar residues; that stretch reads PSNSQGSPIP. A compositionally biased stretch (pro residues) spans 244–255; sequence TQAPMPSPERIV.

In terms of assembly, interacts with NEDD4.

The protein resides in the membrane. The protein is Protein BEAN1 (Bean1) of Mus musculus (Mouse).